The sequence spans 3387 residues: Genome polyprotein (3387 aa).

Residues 1 to 100 lie on the Cytoplasmic side of the membrane; the sequence is MNQRKKVVRP…LNILNGRKRS (100 aa). The hydrophobic; homodimerization of capsid protein C stretch occupies residues 36-71; the sequence is LFSGKGPLRMVLAFITFLRVLSIPPTAGILKRWGQL. Positions 100-113 are cleaved as a propeptide — ER anchor for the capsid protein C, removed in mature form by serine protease NS3; sequence STVTLLCLIPTVMA. A helical transmembrane segment spans residues 101–117; the sequence is TVTLLCLIPTVMAFHLS. Over 118–237 the chain is Extracellular; sequence TRDGEPLMIV…GAWKHAQRVE (120 aa). An N-linked (GlcNAc...) asparagine; by host glycan is attached at asparagine 182. The chain crosses the membrane as a helical span at residues 238 to 258; sequence SWILRNPGFALLAGFMAYMIG. Residues 259 to 265 are Cytoplasmic-facing; it reads QTGIQRT. The helical transmembrane segment at 266-279 threads the bilayer; that stretch reads VFFVLMMLVAPSYG. Topologically, residues 280-725 are extracellular; sequence MRCIGVGNRD…HQVFGSVYTT (446 aa). Intrachain disulfides connect cysteine 282–cysteine 309, cysteine 339–cysteine 400, cysteine 353–cysteine 384, and cysteine 371–cysteine 395. Asparagine 346 carries N-linked (GlcNAc...) asparagine; by host glycosylation. The tract at residues 377 to 390 is fusion peptide; sequence DRGWGNGCGLFGKG. Asparagine 432 is a glycosylation site (N-linked (GlcNAc...) asparagine; by host). Cystine bridges form between cysteine 464/cysteine 564 and cysteine 581/cysteine 612. Residues 726-746 form a helical membrane-spanning segment; the sequence is MFGGVSWMVRILIGLLVLWIG. At 747 to 751 the chain is on the cytoplasmic side; it reads TNSRN. The chain crosses the membrane as a helical span at residues 752–772; the sequence is TPMAMTCIAVGGITLFLGFTV. At 773–1193 the chain is on the extracellular side; the sequence is QADMGCVVSW…IMLGDTMLSR (421 aa). 6 cysteine pairs are disulfide-bonded: cysteine 778–cysteine 789, cysteine 829–cysteine 917, cysteine 953–cysteine 997, cysteine 1054–cysteine 1103, cysteine 1065–cysteine 1087, and cysteine 1086–cysteine 1090. N-linked (GlcNAc...) asparagine; by host glycans are attached at residues asparagine 904 and asparagine 981. A helical membrane pass occupies residues 1194–1218; it reads VGGQTHLAIMIVFKMSPGYVLGVFL. At 1219–1224 the chain is on the lumenal side; sequence RKLTSR. A helical membrane pass occupies residues 1225–1243; it reads ETALMVIGMAMTTVFSIPH. Over 1244–1267 the chain is Cytoplasmic; sequence DLMELIDGISLGLILLKMVTHFDN. A helical membrane pass occupies residues 1268 to 1288; the sequence is TQVGTLALSLTFIRSTMPLTM. Alanine 1289 is a topological domain (lumenal). A helical transmembrane segment spans residues 1290 to 1308; it reads WRTIMAVLFAVTLIPLCRT. The Lumenal segment spans residues 1309 to 1316; it reads SCLQKQSH. Residues 1317 to 1337 traverse the membrane as a helical segment; that stretch reads WVEITAIILGAQALPVYLMTL. The Cytoplasmic segment spans residues 1338–1345; the sequence is MKGASKRS. The helical transmembrane segment at 1346–1366 threads the bilayer; that stretch reads WPLNEGIMAVGLVSLLGSALL. Topologically, residues 1367–1369 are lumenal; sequence KND. The helical transmembrane segment at 1370-1390 threads the bilayer; sequence VPLAGPMVAGGLLLAAYVMSG. Residues 1391 to 1444 lie on the Cytoplasmic side of the membrane; the sequence is SSADLSLERAANVQWDEMADITGSSPIIEVKQDEDGSFSIRDVEETNMITLLVK. An interacts with and activates NS3 protease region spans residues 1397 to 1436; sequence LERAANVQWDEMADITGSSPIIEVKQDEDGSFSIRDVEET. The segment at residues 1445–1465 is an intramembrane region (helical); it reads LALITVSGLYPLAIPITMTLW. Topologically, residues 1466–2146 are cytoplasmic; that stretch reads YMWQVRTQRS…LNELPESLET (681 aa). The Peptidase S7 domain maps to 1475–1652; sequence SGALWDVPSP…ERIGEPDYEV (178 aa). Active-site charge relay system; for serine protease NS3 activity residues include histidine 1525, aspartate 1549, and serine 1609. A Helicase ATP-binding domain is found at 1654–1810; that stretch reads EDIFRKKRLT…QSNSPIEDIE (157 aa). The interval 1658 to 1661 is important for RNA-binding; the sequence is RKKR. Position 1667–1674 (1667–1674) interacts with ATP; sequence LHPGAGKT. Positions 1758 to 1761 match the DEAH box motif; that stretch reads DEAH. One can recognise a Helicase C-terminal domain in the interval 1820-1987; the sequence is TGFDWITDYQ…IIPTLFGPER (168 aa). Lysine 1862 carries the N6-acetyllysine; by host modification. A helical transmembrane segment spans residues 2147–2167; sequence LMLVALLGAMTAGIFLFFMQG. Residues 2168–2169 are Lumenal-facing; the sequence is KG. An intramembrane region (helical) is located at residues 2170–2190; that stretch reads IGKLSVGLIAIAVASGLLWVA. Glutamate 2191 is a topological domain (lumenal). Residues 2192 to 2212 form a helical membrane-spanning segment; sequence IQPQWIAASIILEFFLMVLLI. The Cytoplasmic portion of the chain corresponds to 2213–2225; it reads PEPEKQRTPQDNQ. A helical transmembrane segment spans residues 2226 to 2246; the sequence is LIYVILAILTIIGLVAANEMG. The Lumenal segment spans residues 2247–2270; sequence LIEKTKADFGFYQVKTETTILDVD. The segment at residues 2271 to 2291 is an intramembrane region (helical); the sequence is LRPASAWTLYAVATTILTPML. The Lumenal portion of the chain corresponds to 2292–2301; sequence RHTIENTSAN. Asparagine 2297 and asparagine 2301 each carry an N-linked (GlcNAc...) asparagine; by host glycan. Positions 2302–2322 form an intramembrane region, helical; the sequence is LSLAAIANQAAVLMGLGKGWP. The Lumenal portion of the chain corresponds to 2323–2343; that stretch reads LHRMDLGVPLLAMGCYSQVNP. The helical transmembrane segment at 2344–2364 threads the bilayer; the sequence is TTLTASLVMLLVHYAIIGPGL. The Cytoplasmic portion of the chain corresponds to 2365-2409; that stretch reads QAKATREAQKRTAAGIMKNPTVDGITVIDLEPISYDPKFEKQLGQ. The chain crosses the membrane as a helical span at residues 2410 to 2430; it reads VMLLVLCAGQLLLMRTTWAFC. The Lumenal portion of the chain corresponds to 2431–2455; that stretch reads EVLTLATGPVLTLWEGNPGRFWNTT. The N-linked (GlcNAc...) asparagine; by host glycan is linked to asparagine 2453. Residues 2456-2476 form a helical membrane-spanning segment; the sequence is IAVSTANIFRGSYLAGAGLAF. Residues 2477-3387 are Cytoplasmic-facing; the sequence is SLIKNAQTPR…SALSESEGVL (911 aa). The mRNA cap 0-1 NS5-type MT domain maps to 2489–2751; sequence TGTTGETLGE…DVDLGAGTRS (263 aa). Serine 2543 lines the S-adenosyl-L-methionine pocket. Serine 2543 carries the phosphoserine modification. Catalysis depends on lysine 2548, which acts as the For 2'-O-MTase activity. The SUMO-interacting motif motif lies at 2564–2567; that stretch reads VVDL. S-adenosyl-L-methionine is bound by residues glycine 2573, tryptophan 2574, threonine 2591, lysine 2592, aspartate 2618, and valine 2619. Aspartate 2633 (for 2'-O-MTase activity) is an active-site residue. Isoleucine 2634 is a binding site for S-adenosyl-L-methionine. Active-site for 2'-O-MTase activity residues include lysine 2668 and glutamate 2704. Residue tyrosine 2706 participates in S-adenosyl-L-methionine binding. Residues glutamate 2925, histidine 2929, cysteine 2934, and cysteine 2937 each coordinate Zn(2+). Positions 3016-3166 constitute a RdRp catalytic domain; it reads LMYADDTAGW…PLDERFSTSL (151 aa). Histidine 3200, cysteine 3216, and cysteine 3335 together coordinate Zn(2+).

The protein in the N-terminal section; belongs to the class I-like SAM-binding methyltransferase superfamily. mRNA cap 0-1 NS5-type methyltransferase family. In terms of assembly, homodimer. Interacts (via N-terminus) with host EXOC1 (via C-terminus); this interaction results in EXOC1 degradation through the proteasome degradation pathway. Forms heterodimers with envelope protein E in the endoplasmic reticulum and Golgi. As to quaternary structure, homodimer; in the endoplasmic reticulum and Golgi. Interacts with protein prM. Interacts with non-structural protein 1. In terms of assembly, homodimer; Homohexamer when secreted. Interacts with envelope protein E. Interacts (via N-terminus) with serine protease NS3. As to quaternary structure, forms a heterodimer with serine protease NS3. May form homooligomers. In terms of assembly, forms a heterodimer with NS2B. Interacts with NS4B. Interacts with unphosphorylated RNA-directed RNA polymerase NS5; this interaction stimulates RNA-directed RNA polymerase NS5 guanylyltransferase activity. Interacts with host SHFL. Interacts with host MAVS; this interaction inhibits the synthesis of IFN-beta. Interacts with host SHFL. Interacts with host AUP1; the interaction occurs in the presence of Dengue virus NS4B and induces lipophagy which facilitates production of virus progeny particles. As to quaternary structure, interacts with serine protease NS3. In terms of assembly, homodimer. Interacts with host STAT2; this interaction inhibits the phosphorylation of the latter, and, when all viral proteins are present (polyprotein), targets STAT2 for degradation. Interacts with serine protease NS3. Interacts with host PAF1 complex; the interaction may prevent the recruitment of the PAF1 complex to interferon-responsive genes, and thus reduces the immune response. Specific enzymatic cleavages in vivo yield mature proteins. Cleavages in the lumen of endoplasmic reticulum are performed by host signal peptidase, whereas cleavages in the cytoplasmic side are performed by serine protease NS3. Signal cleavage at the 2K-4B site requires a prior NS3 protease-mediated cleavage at the 4A-2K site. Post-translationally, cleaved in post-Golgi vesicles by a host furin, releasing the mature small envelope protein M, and peptide pr. This cleavage is incomplete as up to 30% of viral particles still carry uncleaved prM. In terms of processing, N-glycosylated. N-glycosylated. The excreted form is glycosylated and this is required for efficient secretion of the protein from infected cells. Post-translationally, acetylated by host KAT5. Acetylation modulates NS3 RNA-binding and unwinding activities and plays an important positive role for viral replication. In terms of processing, sumoylation of RNA-directed RNA polymerase NS5 increases NS5 protein stability allowing proper viral RNA replication. Phosphorylated on serines residues. This phosphorylation may trigger NS5 nuclear localization.

The protein resides in the virion. It localises to the host nucleus. The protein localises to the host cytoplasm. It is found in the host perinuclear region. Its subcellular location is the secreted. The protein resides in the virion membrane. It localises to the host endoplasmic reticulum membrane. The protein localises to the host mitochondrion. It carries out the reaction Selective hydrolysis of -Xaa-Xaa-|-Yaa- bonds in which each of the Xaa can be either Arg or Lys and Yaa can be either Ser or Ala.. It catalyses the reaction RNA(n) + a ribonucleoside 5'-triphosphate = RNA(n+1) + diphosphate. The catalysed reaction is a ribonucleoside 5'-triphosphate + H2O = a ribonucleoside 5'-diphosphate + phosphate + H(+). The enzyme catalyses ATP + H2O = ADP + phosphate + H(+). It carries out the reaction a 5'-end (5'-triphosphoguanosine)-ribonucleoside in mRNA + S-adenosyl-L-methionine = a 5'-end (N(7)-methyl 5'-triphosphoguanosine)-ribonucleoside in mRNA + S-adenosyl-L-homocysteine. It catalyses the reaction a 5'-end (N(7)-methyl 5'-triphosphoguanosine)-ribonucleoside in mRNA + S-adenosyl-L-methionine = a 5'-end (N(7)-methyl 5'-triphosphoguanosine)-(2'-O-methyl-ribonucleoside) in mRNA + S-adenosyl-L-homocysteine + H(+). Its function is as follows. Plays a role in virus budding by binding to the cell membrane and gathering the viral RNA into a nucleocapsid that forms the core of a mature virus particle. During virus entry, may induce genome penetration into the host cytoplasm after hemifusion induced by the surface proteins. Can migrate to the cell nucleus where it modulates host functions. Overcomes the anti-viral effects of host EXOC1 by sequestering and degrading the latter through the proteasome degradation pathway. Inhibits RNA silencing by interfering with host Dicer. Functionally, prevents premature fusion activity of envelope proteins in trans-Golgi by binding to envelope protein E at pH6.0. After virion release in extracellular space, gets dissociated from E dimers. In terms of biological role, acts as a chaperone for envelope protein E during intracellular virion assembly by masking and inactivating envelope protein E fusion peptide. prM is the only viral peptide matured by host furin in the trans-Golgi network probably to avoid catastrophic activation of the viral fusion activity in acidic Golgi compartment prior to virion release. prM-E cleavage is inefficient, and many virions are only partially matured. These uncleaved prM would play a role in immune evasion. Its function is as follows. May play a role in virus budding. Exerts cytotoxic effects by activating a mitochondrial apoptotic pathway through M ectodomain. May display a viroporin activity. Binds to host cell surface receptor and mediates fusion between viral and cellular membranes. Envelope protein is synthesized in the endoplasmic reticulum in the form of heterodimer with protein prM. They play a role in virion budding in the ER, and the newly formed immature particle is covered with 60 spikes composed of heterodimer between precursor prM and envelope protein E. The virion is transported to the Golgi apparatus where the low pH causes dissociation of PrM-E heterodimers and formation of E homodimers. prM-E cleavage is inefficient, and many virions are only partially matured. These uncleaved prM would play a role in immune evasion. Functionally, involved in immune evasion, pathogenesis and viral replication. Once cleaved off the polyprotein, is targeted to three destinations: the viral replication cycle, the plasma membrane and the extracellular compartment. Essential for viral replication. Required for formation of the replication complex and recruitment of other non-structural proteins to the ER-derived membrane structures. Excreted as a hexameric lipoparticle that plays a role against host immune response. Antagonizing the complement function. Binds to the host macrophages and dendritic cells. Inhibits signal transduction originating from Toll-like receptor 3 (TLR3). In terms of biological role, disrupts the host endothelial glycocalyx layer of host pulmonary microvascular endothelial cells, inducing degradation of sialic acid and shedding of heparan sulfate proteoglycans. NS1 induces expression of sialidases, heparanase, and activates cathepsin L, which activates heparanase via enzymatic cleavage. These effects are probably linked to the endothelial hyperpermeability observed in severe dengue disease. Its function is as follows. Component of the viral RNA replication complex that functions in virion assembly and antagonizes the host immune response. Required cofactor for the serine protease function of NS3. May have membrane-destabilizing activity and form viroporins. Functionally, displays three enzymatic activities: serine protease, NTPase and RNA helicase. NS3 serine protease, in association with NS2B, performs its autocleavage and cleaves the polyprotein at dibasic sites in the cytoplasm: C-prM, NS2A-NS2B, NS2B-NS3, NS3-NS4A, NS4A-2K and NS4B-NS5. NS3 RNA helicase binds RNA and unwinds dsRNA in the 3' to 5' direction. In terms of biological role, regulates the ATPase activity of the NS3 helicase activity. NS4A allows NS3 helicase to conserve energy during unwinding. Plays a role in the inhibition of the host innate immune response. Interacts with host MAVS and thereby prevents the interaction between RIGI and MAVS. In turn, IFN-beta production is impaired. Interacts with host AUP1 which mediates induction of lipophagy in host cells and facilitates production of virus progeny particles. Its function is as follows. Functions as a signal peptide for NS4B and is required for the interferon antagonism activity of the latter. Induces the formation of ER-derived membrane vesicles where the viral replication takes place. Inhibits interferon (IFN)-induced host STAT1 phosphorylation and nuclear translocation, thereby preventing the establishment of cellular antiviral state by blocking the IFN-alpha/beta pathway. Functionally, replicates the viral (+) and (-) RNA genome, and performs the capping of genomes in the cytoplasm. NS5 methylates viral RNA cap at guanine N-7 and ribose 2'-O positions. Besides its role in RNA genome replication, also prevents the establishment of cellular antiviral state by blocking the interferon-alpha/beta (IFN-alpha/beta) signaling pathway. Inhibits host TYK2 and STAT2 phosphorylation, thereby preventing activation of JAK-STAT signaling pathway. May reduce immune responses by preventing the recruitment of the host PAF1 complex to interferon-responsive genes. The chain is Genome polyprotein from Aedes aegypti (Yellowfever mosquito).